The chain runs to 319 residues: tRNA pseudouridine synthase B (319 aa).

Residue Asp-49 is the Nucleophile of the active site.

The protein belongs to the pseudouridine synthase TruB family. Type 1 subfamily.

It catalyses the reaction uridine(55) in tRNA = pseudouridine(55) in tRNA. Responsible for synthesis of pseudouridine from uracil-55 in the psi GC loop of transfer RNAs. This is tRNA pseudouridine synthase B from Aeromonas salmonicida (strain A449).